Here is a 152-residue protein sequence, read N- to C-terminus: Cyanate hydratase (152 aa).

Active-site residues include arginine 98, glutamate 101, and serine 124.

This sequence belongs to the cyanase family.

It carries out the reaction cyanate + hydrogencarbonate + 3 H(+) = NH4(+) + 2 CO2. Catalyzes the reaction of cyanate with bicarbonate to produce ammonia and carbon dioxide. This is Cyanate hydratase from Uncinocarpus reesii (strain UAMH 1704).